The sequence spans 520 residues: Vacuolar protein sorting-associated protein 9A (520 aa).

The 145-residue stretch at 102 to 246 (VIADEKLFQK…ISNIDAKSIS (145 aa)) folds into the VPS9 domain. GTP-binding residues include Asn180 and Asp185. Disordered stretches follow at residues 267 to 331 (DSQT…AESI), 396 to 433 (LAPSSSPLQASSGFNTSKESEDHRRSSSDVQMTKETDR), and 464 to 520 (LVEG…EASE). Over residues 287 to 323 (LQKTQSLNPKRENTLFQSKSSDSLSGTNELLNINSET) the composition is skewed to polar residues. Position 330 is a phosphoserine (Ser330). Residues 396-407 (LAPSSSPLQASS) show a composition bias toward low complexity. Basic and acidic residues-rich tracts occupy residues 413-433 (KESEDHRRSSSDVQMTKETDR) and 464-497 (LVEGKDEERDSKVQGEVDAKDIELMKQIPKREGD).

In terms of assembly, homodimer. The homodimer interacts with RABF2B. Interacts with RABF1 and RABF2A. Widely expressed.

Functions as a guanine nucleotide exchange factor (GEF) for Rab small GTPases. Activates specifically RABF1, RABF2A and RABF2B proteins. Required for early stages of embryogenesis, cytokinesis, embryogenesis, and organ development. Is essential for the establishment or maintenance of the polar localization of the auxin efflux carrier PIN1. The protein is Vacuolar protein sorting-associated protein 9A of Arabidopsis thaliana (Mouse-ear cress).